We begin with the raw amino-acid sequence, 466 residues long: UDP-glycosyltransferase 79 (466 aa).

His27 (proton acceptor) is an active-site residue. His27 lines the UDP-alpha-D-glucose pocket. The active-site Charge relay is Asp120. The UDP-alpha-D-glucose site is built by Ser142, Thr291, Phe343, Cys344, His361, Trp364, Asn365, Ser366, Glu369, Asp385, and Gln386. Residues Thr291, Phe343, Cys344, and His361 each coordinate UDP. Residues Asn365, Ser366, and Glu369 each coordinate UDP.

Belongs to the UDP-glycosyltransferase family.

Its function is as follows. Involved in the detoxification of the Fusarium mycotoxin deoxynivalenol by the transfer of glucose from UDP-D-glucose to the hydroxyl group at C-3, forming deoxynivalenol-3-O-beta-D-glucoside. The chain is UDP-glycosyltransferase 79 from Oryza sativa subsp. japonica (Rice).